The primary structure comprises 76 residues: Tautomerase PptA (76 aa).

Residue P2 is the Proton acceptor; via imino nitrogen of the active site.

It belongs to the 4-oxalocrotonate tautomerase family. PptA subfamily. Homodimer.

The protein localises to the cytoplasm. The sequence is that of Tautomerase PptA from Enterobacter sp. (strain 638).